Here is a 127-residue protein sequence, read N- to C-terminus: Aspartate 1-decarboxylase (127 aa).

The active-site Schiff-base intermediate with substrate; via pyruvic acid is the serine 25. At serine 25 the chain carries Pyruvic acid (Ser). Threonine 57 contributes to the substrate binding site. The active-site Proton donor is the tyrosine 58. 73–75 (GAA) lines the substrate pocket.

It belongs to the PanD family. Heterooctamer of four alpha and four beta subunits. It depends on pyruvate as a cofactor. In terms of processing, is synthesized initially as an inactive proenzyme, which is activated by self-cleavage at a specific serine bond to produce a beta-subunit with a hydroxyl group at its C-terminus and an alpha-subunit with a pyruvoyl group at its N-terminus.

The protein localises to the cytoplasm. It carries out the reaction L-aspartate + H(+) = beta-alanine + CO2. It functions in the pathway cofactor biosynthesis; (R)-pantothenate biosynthesis; beta-alanine from L-aspartate: step 1/1. Functionally, catalyzes the pyruvoyl-dependent decarboxylation of aspartate to produce beta-alanine. In Vesicomyosocius okutanii subsp. Calyptogena okutanii (strain HA), this protein is Aspartate 1-decarboxylase.